A 22-amino-acid polypeptide reads, in one-letter code: Piscidin-3 (22 aa).

Glycine amide is present on G22.

This sequence belongs to the pleurocidin family. Mast cells in gill, skin and gut, and in lining blood vessels in the viscera.

It localises to the secreted. It is found in the membrane. Antimicrobial peptide with broad-spectrum activity against Gram-positive and Gram-negative bacteria. Rapidly inactivates both channel catfish herpesvirus (ED(50)=11 uM) and frog virus 3 (ED(50)=16 uM) over a wide temperature range. Has hemolytic activity. The protein is Piscidin-3 of Morone chrysops x Morone saxatilis (White bass x Striped bass).